We begin with the raw amino-acid sequence, 365 residues long: Cobalt-precorrin-5B C(1)-methyltransferase (365 aa).

Belongs to the CbiD family.

It catalyses the reaction Co-precorrin-5B + S-adenosyl-L-methionine = Co-precorrin-6A + S-adenosyl-L-homocysteine. It functions in the pathway cofactor biosynthesis; adenosylcobalamin biosynthesis; cob(II)yrinate a,c-diamide from sirohydrochlorin (anaerobic route): step 6/10. Its function is as follows. Catalyzes the methylation of C-1 in cobalt-precorrin-5B to form cobalt-precorrin-6A. This Paraburkholderia phytofirmans (strain DSM 17436 / LMG 22146 / PsJN) (Burkholderia phytofirmans) protein is Cobalt-precorrin-5B C(1)-methyltransferase.